Reading from the N-terminus, the 450-residue chain is Phosphoglucosamine mutase (450 aa).

The Phosphoserine intermediate role is filled by Ser-101. The Mg(2+) site is built by Ser-101, Asp-242, Asp-244, and Asp-246. A Phosphoserine modification is found at Ser-101.

The protein belongs to the phosphohexose mutase family. Mg(2+) serves as cofactor. Post-translationally, activated by phosphorylation.

It carries out the reaction alpha-D-glucosamine 1-phosphate = D-glucosamine 6-phosphate. Its function is as follows. Catalyzes the conversion of glucosamine-6-phosphate to glucosamine-1-phosphate. The protein is Phosphoglucosamine mutase of Rhodopseudomonas palustris (strain BisA53).